Reading from the N-terminus, the 125-residue chain is Ribosome-binding factor A (125 aa).

It belongs to the RbfA family. As to quaternary structure, monomer. Binds 30S ribosomal subunits, but not 50S ribosomal subunits or 70S ribosomes.

It is found in the cytoplasm. In terms of biological role, one of several proteins that assist in the late maturation steps of the functional core of the 30S ribosomal subunit. Associates with free 30S ribosomal subunits (but not with 30S subunits that are part of 70S ribosomes or polysomes). Required for efficient processing of 16S rRNA. May interact with the 5'-terminal helix region of 16S rRNA. The polypeptide is Ribosome-binding factor A (Akkermansia muciniphila (strain ATCC BAA-835 / DSM 22959 / JCM 33894 / BCRC 81048 / CCUG 64013 / CIP 107961 / Muc)).